The sequence spans 302 residues: Succinate--CoA ligase [ADP-forming] subunit alpha (302 aa).

Residues 17 to 20 (TGST), lysine 43, and 96 to 98 (ITE) each bind CoA. A substrate-binding site is contributed by tyrosine 159. The active-site Tele-phosphohistidine intermediate is the histidine 247.

Belongs to the succinate/malate CoA ligase alpha subunit family. As to quaternary structure, heterotetramer of two alpha and two beta subunits.

The catalysed reaction is succinate + ATP + CoA = succinyl-CoA + ADP + phosphate. It carries out the reaction GTP + succinate + CoA = succinyl-CoA + GDP + phosphate. The protein operates within carbohydrate metabolism; tricarboxylic acid cycle; succinate from succinyl-CoA (ligase route): step 1/1. Functionally, succinyl-CoA synthetase functions in the citric acid cycle (TCA), coupling the hydrolysis of succinyl-CoA to the synthesis of either ATP or GTP and thus represents the only step of substrate-level phosphorylation in the TCA. The alpha subunit of the enzyme binds the substrates coenzyme A and phosphate, while succinate binding and nucleotide specificity is provided by the beta subunit. In Staphylococcus aureus (strain COL), this protein is Succinate--CoA ligase [ADP-forming] subunit alpha.